A 67-amino-acid polypeptide reads, in one-letter code: DNA-directed RNA polymerase subunit omega (67 aa).

The protein belongs to the RNA polymerase subunit omega family. In terms of assembly, the RNAP catalytic core consists of 2 alpha, 1 beta, 1 beta' and 1 omega subunit. When a sigma factor is associated with the core the holoenzyme is formed, which can initiate transcription.

It carries out the reaction RNA(n) + a ribonucleoside 5'-triphosphate = RNA(n+1) + diphosphate. Functionally, promotes RNA polymerase assembly. Latches the N- and C-terminal regions of the beta' subunit thereby facilitating its interaction with the beta and alpha subunits. The polypeptide is DNA-directed RNA polymerase subunit omega (Bordetella pertussis (strain Tohama I / ATCC BAA-589 / NCTC 13251)).